The following is a 293-amino-acid chain: uncharacterized protein (293 aa).

Basic residues predominate over residues M1–R10. A disordered region spans residues M1 to A28. The segment covering G15–A28 has biased composition (polar residues).

The protein resides in the nucleus. This is an uncharacterized protein from Saccharomyces cerevisiae (strain ATCC 204508 / S288c) (Baker's yeast).